Consider the following 156-residue polypeptide: Nuclear cap-binding protein subunit 2 (156 aa).

The residue at position 2 (Ser2) is an N-acetylserine. Ser13 and Ser18 each carry phosphoserine. MRNA contacts are provided by residues Tyr20, Tyr43, Arg112–Asp116, Arg123–Arg127, and Gln133–Val134. The 79-residue stretch at Cys40–Gly118 folds into the RRM domain. Positions Gln124–Gln156 are disordered. Basic and acidic residues predominate over residues Val134 to Ala144. An Omega-N-methylarginine modification is found at Arg146.

Belongs to the RRM NCBP2 family. Component of the nuclear cap-binding complex (CBC), a heterodimer composed of NCBP1/CBP80 and NCBP2/CBP20 that interacts with m7GpppG-capped RNA. Found in a U snRNA export complex with PHAX/RNUXA, NCBP1/CBP80, NCBP2/CBP20, RAN, XPO1 and m7G-capped RNA. Interacts with PHAX/RNUXA, EIF4G1, HNRNPF, HNRNPH1 and ALYREF/THOC4/ALY. Interacts with SRRT/ARS2 and KPNA3.

It is found in the nucleus. The protein localises to the cytoplasm. Functionally, component of the cap-binding complex (CBC), which binds co-transcriptionally to the 5' cap of pre-mRNAs and is involved in various processes such as pre-mRNA splicing, translation regulation, nonsense-mediated mRNA decay, RNA-mediated gene silencing (RNAi) by microRNAs (miRNAs) and mRNA export. The CBC complex is involved in mRNA export from the nucleus via its interaction with ALYREF/THOC4/ALY, leading to the recruitment of the mRNA export machinery to the 5' end of mRNA and to mRNA export in a 5' to 3' direction through the nuclear pore. The CBC complex is also involved in mediating U snRNA and intronless mRNAs export from the nucleus. The CBC complex is essential for a pioneer round of mRNA translation, before steady state translation when the CBC complex is replaced by cytoplasmic cap-binding protein eIF4E. The pioneer round of mRNA translation mediated by the CBC complex plays a central role in nonsense-mediated mRNA decay (NMD), NMD only taking place in mRNAs bound to the CBC complex, but not on eIF4E-bound mRNAs. The CBC complex enhances NMD in mRNAs containing at least one exon-junction complex (EJC) via its interaction with UPF1, promoting the interaction between UPF1 and UPF2. The CBC complex is also involved in 'failsafe' NMD, which is independent of the EJC complex, while it does not participate in Staufen-mediated mRNA decay (SMD). During cell proliferation, the CBC complex is also involved in microRNAs (miRNAs) biogenesis via its interaction with SRRT/ARS2, thereby being required for miRNA-mediated RNA interference. The CBC complex also acts as a negative regulator of PARN, thereby acting as an inhibitor of mRNA deadenylation. In the CBC complex, NCBP2/CBP20 recognizes and binds capped RNAs (m7GpppG-capped RNA) but requires NCBP1/CBP80 to stabilize the movement of its N-terminal loop and lock the CBC into a high affinity cap-binding state with the cap structure. The conventional cap-binding complex with NCBP2 binds both small nuclear RNA (snRNA) and messenger (mRNA) and is involved in their export from the nucleus. The sequence is that of Nuclear cap-binding protein subunit 2 (Ncbp2) from Mus musculus (Mouse).